We begin with the raw amino-acid sequence, 300 residues long: Protein YIF1B-B (300 aa).

The interval 1 to 46 (MNQESSFRAPPKRRVRGSNPNISNPHQLFDDTSGGPVPHGGDFPNH) is disordered. Over 1-142 (MNQESSFRAP…APRFDINAPD (142 aa)) the chain is Cytoplasmic. The helical transmembrane segment at 143-163 (LYIPVMAFITYILVAGLALGT) threads the bilayer. Residues 164-178 (QSRFSPEILGMQASS) lie on the Extracellular side of the membrane. A helical transmembrane segment spans residues 179 to 199 (ALAWLIVEVLAILLSLYLVTV). Topologically, residues 200-205 (NTDLTT) are cytoplasmic. A helical membrane pass occupies residues 206–226 (VDLVAFSGYKYVGMISGVIAG). L227 is a topological domain (extracellular). The chain crosses the membrane as a helical span at residues 228–248 (LFGNTGYYVVLAWCCISIVFF). The Cytoplasmic segment spans residues 249-278 (MIRTLRLKILSEAAAEGVLVRGARNQLRMY). The chain crosses the membrane as a helical span at residues 279–299 (LTMAIAAVQPIFMYWLTYHLV). R300 is a topological domain (extracellular).

This sequence belongs to the YIF1 family.

It localises to the endoplasmic reticulum membrane. Its subcellular location is the golgi apparatus membrane. It is found in the endoplasmic reticulum-Golgi intermediate compartment membrane. Its function is as follows. Functions in endoplasmic reticulum to Golgi vesicle-mediated transport and regulates the proper organization of the endoplasmic reticulum and the Golgi. Plays a key role in targeting to neuronal dendrites receptors such as HTR1A. Plays also a role in primary cilium and sperm flagellum assembly probably through protein transport to these compartments. The protein is Protein YIF1B-B (yif1b-b) of Xenopus laevis (African clawed frog).